Reading from the N-terminus, the 123-residue chain is D-ribose pyranase (123 aa).

The active-site Proton donor is the histidine 20. Residues aspartate 28, histidine 90, and 112–114 contribute to the substrate site; that span reads YAN.

Belongs to the RbsD / FucU family. RbsD subfamily. As to quaternary structure, homodecamer.

Its subcellular location is the cytoplasm. The catalysed reaction is beta-D-ribopyranose = beta-D-ribofuranose. The protein operates within carbohydrate metabolism; D-ribose degradation; D-ribose 5-phosphate from beta-D-ribopyranose: step 1/2. Catalyzes the interconversion of beta-pyran and beta-furan forms of D-ribose. This Corynebacterium glutamicum (strain ATCC 13032 / DSM 20300 / JCM 1318 / BCRC 11384 / CCUG 27702 / LMG 3730 / NBRC 12168 / NCIMB 10025 / NRRL B-2784 / 534) protein is D-ribose pyranase.